The following is a 455-amino-acid chain: Argininosuccinate lyase (455 aa).

The protein belongs to the lyase 1 family. Argininosuccinate lyase subfamily.

It is found in the cytoplasm. The catalysed reaction is 2-(N(omega)-L-arginino)succinate = fumarate + L-arginine. It participates in amino-acid biosynthesis; L-arginine biosynthesis; L-arginine from L-ornithine and carbamoyl phosphate: step 3/3. The protein is Argininosuccinate lyase of Shewanella oneidensis (strain ATCC 700550 / JCM 31522 / CIP 106686 / LMG 19005 / NCIMB 14063 / MR-1).